We begin with the raw amino-acid sequence, 477 residues long: Homeobox protein Meis2 (477 aa).

Positions 71–191 (DALKRDKDAI…KMPIDLVIDE (121 aa)) are required for interaction with PBX1. The region spanning 110 to 193 (GGDVCSSDSF…PIDLVIDERD (84 aa)) is the MEIS N-terminal domain. Residues 193–203 (DGSSKSDHEEL) are compositionally biased toward basic and acidic residues. The disordered stretch occupies residues 193-283 (DGSSKSDHEE…KKRQKKRGIF (91 aa)). 2 stretches are compositionally biased toward polar residues: residues 204-217 (SGSSTNLADHNPSS) and 239-251 (GHASQSGDNSSEQ). Positions 276–338 (RQKKRGIFPK…NARRRIVQPM (63 aa)) form a DNA-binding region, homeobox; TALE-type. The interaction with DNA stretch occupies residues 299–333 (LTHPYPSEEQKKQLAQDTGLTILQVNNWFINARRR). A transcriptional activation domain region spans residues 340–477 (DQSNRAGFLL…GGQVMDIHAQ (138 aa)).

It belongs to the TALE/MEIS homeobox family. In terms of assembly, monomer and homodimer. Heterodimer with HOXB13. Isoform 2 interacts with TLX1. Isoform 3 interacts with HOXA13 and PBX1 isoform PBX1b. Isoform 4 interacts with SP1, SP3 and KLF4. Isoform 4 and isoform 5 interact with PBX1 isoform PBX1a; the interaction partially relieves MEIS2 autoinhibition. Isoform 3 also known as MEIS2b is part of a PDX1:PBX1b:Meis2B complex; Meis2B is recruited by PBX1b and can be replaced by isoform 4 in a small fraction of complexes. Can form trimeric complexes including HOXB8 and PBX2 or PBX3. Expressed in various tissues. Expressed at high level in the lymphoid organs of hematopoietic tissues. Also expressed in some regions of the brain, such as the putamen.

It is found in the nucleus. The protein localises to the cytoplasm. Its subcellular location is the perinuclear region. Its function is as follows. Involved in transcriptional regulation. Binds to HOX or PBX proteins to form dimers, or to a DNA-bound dimer of PBX and HOX proteins and thought to have a role in stabilization of the homeoprotein-DNA complex. Isoform 3 is required for the activity of a PDX1:PBX1b:MEIS2b complex in pancreatic acinar cells involved in the transcriptional activation of the ELA1 enhancer; the complex binds to the enhancer B element and cooperates with the transcription factor 1 complex (PTF1) bound to the enhancer A element; MEIS2 is not involved in complex DNA-binding. Probably in complex with PBX1, is involved in transcriptional regulation by KLF4. Isoform 3 and isoform 4 can bind to a EPHA8 promoter sequence containing the DNA motif 5'-CGGTCA-3'; in cooperation with a PBX protein (such as PBX2) is proposed to be involved in the transcriptional activation of EPHA8 in the developing midbrain. May be involved in regulation of myeloid differentiation. Can bind to the DNA sequence 5'-TGACAG-3'in the activator ACT sequence of the D(1A) dopamine receptor (DRD1) promoter and activate DRD1 transcription; isoform 5 cannot activate DRD1 transcription. The chain is Homeobox protein Meis2 (MEIS2) from Homo sapiens (Human).